The primary structure comprises 167 residues: RIHPCPVNKCKCSRAPGRSLSYSKRIINEIRQNPSKCQIFFYQTSPPPSLAPYPLQRLRPYPSSMNPRDLEMVVVTNFQSQSKRRVLFNKFQISQLEKRLKQRYLTAQERQELAHTIGLTPTQVKIWFQNHAYKMKRLFHDDHVEASVHKWPIKSAHLQPKVSTRVV.

Residues 80–139 constitute a DNA-binding region (homeobox); that stretch reads SQSKRRVLFNKFQISQLEKRLKQRYLTAQERQELAHTIGLTPTQVKIWFQNHAYKMKRLF.

The protein belongs to the NK-2 homeobox family.

The protein resides in the nucleus. The chain is Homeobox protein EgHBX3 (HBX3) from Echinococcus granulosus (Hydatid tapeworm).